Here is a 364-residue protein sequence, read N- to C-terminus: MRLLGIETSCDETATAVIEHTIGGNSQILSNIVWSQTDHHAPYGGVVPEIAARAHVEILDELILKALRDAHTKLKDIDAIAVTNGPGLIGGLLVGVMSAKALSLATGKPFIGVNHLEGHALTAVLTHNVHFPYLLLLVSGGHTQTILVHGVGNYQRLGTTIDDALGEAFDKTAKLLGLPYPGGPAIEKAALLGNKNRIPLPRPLKGEKRLDFSFSGLKTAVRQAATAISPLTESDVADIAASFQAAVTDTVYDRVYLALQHFTQQYPLSRHQGPRPPALVVAGGVAANQAIRLTLQELADQQGFEFIAPPLSLCTDNAAMIAFAGAQRLARGEKSSLDIAPRSRWPLDEKSAPLIGTGRRGTKA.

Fe cation-binding residues include His-115 and His-119. Substrate is bound by residues Leu-137–Gly-141, Asp-170, Gly-183, and Asn-288. Residue Asp-316 coordinates Fe cation. Residues Pro-341–Ala-364 form a disordered region.

This sequence belongs to the KAE1 / TsaD family. Fe(2+) serves as cofactor.

It localises to the cytoplasm. It carries out the reaction L-threonylcarbamoyladenylate + adenosine(37) in tRNA = N(6)-L-threonylcarbamoyladenosine(37) in tRNA + AMP + H(+). Its function is as follows. Required for the formation of a threonylcarbamoyl group on adenosine at position 37 (t(6)A37) in tRNAs that read codons beginning with adenine. Is involved in the transfer of the threonylcarbamoyl moiety of threonylcarbamoyl-AMP (TC-AMP) to the N6 group of A37, together with TsaE and TsaB. TsaD likely plays a direct catalytic role in this reaction. In Bartonella henselae (strain ATCC 49882 / DSM 28221 / CCUG 30454 / Houston 1) (Rochalimaea henselae), this protein is tRNA N6-adenosine threonylcarbamoyltransferase.